Here is a 452-residue protein sequence, read N- to C-terminus: Probable 1,4-beta-D-glucan cellobiohydrolase A (452 aa).

A signal peptide spans 1-17; that stretch reads MHQRALLFSALAVAANA. Asn-81 carries an N-linked (GlcNAc...) asparagine glycan. Residue Glu-226 is the Nucleophile of the active site. Glu-231 acts as the Proton donor in catalysis. The N-linked (GlcNAc...) asparagine glycan is linked to Asn-284. The segment at 406-432 is disordered; the sequence is DPSKPGVARGTCEHGAGDPEKVESQHP. Positions 416–431 are enriched in basic and acidic residues; that stretch reads TCEHGAGDPEKVESQH.

Belongs to the glycosyl hydrolase 7 (cellulase C) family.

The protein localises to the secreted. It catalyses the reaction Hydrolysis of (1-&gt;4)-beta-D-glucosidic linkages in cellulose and cellotetraose, releasing cellobiose from the non-reducing ends of the chains.. Its function is as follows. The biological conversion of cellulose to glucose generally requires three types of hydrolytic enzymes: (1) Endoglucanases which cut internal beta-1,4-glucosidic bonds; (2) Exocellobiohydrolases that cut the disaccharide cellobiose from the non-reducing end of the cellulose polymer chain; (3) Beta-1,4-glucosidases which hydrolyze the cellobiose and other short cello-oligosaccharides to glucose. This chain is Probable 1,4-beta-D-glucan cellobiohydrolase A (cbhA), found in Neosartorya fischeri (strain ATCC 1020 / DSM 3700 / CBS 544.65 / FGSC A1164 / JCM 1740 / NRRL 181 / WB 181) (Aspergillus fischerianus).